The sequence spans 617 residues: MKIHFRDLVSGLVKEIDEIEKSDRAQGDKTRRYQGAARKFKNAVFMDKRKYRGNGMKNRISLTTFNKYLSRARSRFEERLHHSFPQSIATISNKYPAFSEIIKDLDNRPAHEVRIKLKELITHLESGVNLLEKIGSLGKIKPSTAKKIVSLKKMYPSWANDLDTLISTEDATELQQKLEQGTDLLNALHSLKVNHEVMYALTMQPSDRAALKARHDAALHFKKRNIVPIDYPGYMQRMTDILHLPDIAFEDSMASLAPLAFALAAASGRRQIEILITGEFDAKNKSIIKFSGQAKKRMAVSGGHYEIYSLIDSELFIQRLEFLRSHSSILRLQNLEIAHDEHRTELSVINGFVAKPLNDAAKQFFVDDRRVFKDTRAIYARIAYEKWFRTDPRWAKCDEDVFFSELLGHDDPDTQLAYKQFKLVNFNPKWTPNISDENPRLAALQELDNDMPGLARGDAAVRIHEWVKEQLAQNPAAKITAYQIKKNLNCRNDLASRYMAWCADALGVVIGDDGQARPEELPPSLVLDINADDTDAEEDEIEEDFTDEEIDDTEFDVSDNASDEDKPEDKPRFAAPIRRSEDSWLIKFEFAGKQYSWEGNAESVIDAMKQAWTENME.

Arginine 270, lysine 295, arginine 376, and histidine 409 together coordinate DNA. The active-site Nucleophile is tyrosine 418. The span at aspartate 535–serine 562 shows a compositional bias: acidic residues. The interval aspartate 535–alanine 575 is disordered. The segment covering aspartate 563 to alanine 575 has biased composition (basic and acidic residues).

This sequence belongs to the Caudoviricetes Protelomerase family. Monomer. Homodimer; in presence of DNA.

In terms of biological role, converts the circular intermediates produced by the viral replication and carrying a joined telomere site to a linear DNA molecule with covalently closed hairpin ends. The viral circular DNA is cleaved at a palindromic site called telRL thereby generating a linear prophage plasmid with telomeres. Binds covalently to the 3'-phosphoryl of the cleaved strands. The protein is Protelomerase (tel) of Yersinia enterocolitica (Bacteriophage PY54).